Here is a 228-residue protein sequence, read N- to C-terminus: Small ribosomal subunit protein uS3 (228 aa).

The 69-residue stretch at 39 to 107 folds into the KH type-2 domain; sequence VREYLQDKLK…PVHINIEEIR (69 aa).

It belongs to the universal ribosomal protein uS3 family. Part of the 30S ribosomal subunit. Forms a tight complex with proteins S10 and S14.

Functionally, binds the lower part of the 30S subunit head. Binds mRNA in the 70S ribosome, positioning it for translation. This chain is Small ribosomal subunit protein uS3, found in Stutzerimonas stutzeri (strain A1501) (Pseudomonas stutzeri).